We begin with the raw amino-acid sequence, 264 residues long: Small ribosomal subunit protein uS2 (264 aa).

The interval 225–264 is disordered; the sequence is GKKAREERQLAAAKDAAGDAKPEAEEAPVAAEAEEAPAAE.

Belongs to the universal ribosomal protein uS2 family.

This chain is Small ribosomal subunit protein uS2, found in Corynebacterium glutamicum (strain R).